The chain runs to 828 residues: Fibroblast growth factor receptor 4 (828 aa).

Positions 1-31 (MSGSIRRSYTAMQNFPRFLLGVLFVATLSSC) are cleaved as a signal peptide. Residues 32–392 (RPRLSEDEAN…AEPAESRYMD (361 aa)) are Extracellular-facing. The 95-residue stretch at 33-127 (PRLSEDEANW…GKILRRFSIS (95 aa)) folds into the Ig-like C2-type 1 domain. C67 and C112 are disulfide-bonded. N70 is a glycosylation site (N-linked (GlcNAc...) asparagine). The tract at residues 132-156 (LASGDEEEEEEDDDDEDGRREDTTA) is disordered. The segment covering 135 to 147 (GDEEEEEEDDDDE) has biased composition (acidic residues). Ig-like C2-type domains lie at 169–259 (PYWT…LTYT) and 272–372 (PILQ…AWLT). Residues C194 and C247 are joined by a disulfide bond. 4 N-linked (GlcNAc...) asparagine glycosylation sites follow: N244, N281, N313, and N345. A disulfide bridge connects residues C294 and C356. A helical transmembrane segment spans residues 393–413 (IIIYTSGFLAVAMAIMIVILC). At 414–828 (RMQTPHSKQT…YHNIHSQLGT (415 aa)) the chain is on the cytoplasmic side. The region spanning 490–777 (LVLGKPLGEG…ILTAVSEEYL (288 aa)) is the Protein kinase domain. ATP is bound by residues 496-504 (LGEGCFGQV) and K526. Residue D635 is the Proton acceptor of the active site. Residues Y665, Y666, and Y776 each carry the phosphotyrosine; by autocatalysis modification.

Belongs to the protein kinase superfamily. Tyr protein kinase family. Fibroblast growth factor receptor subfamily. Ubiquitinated. Subject to proteasomal degradation when not fully glycosylated. In terms of processing, autophosphorylated. Binding of FGF family members together with heparan sulfate proteoglycan or heparin promotes receptor dimerization and autophosphorylation on tyrosine residues. Autophosphorylation occurs in trans between the two FGFR molecules present in the dimer.

Its subcellular location is the cell membrane. It localises to the endosome. The protein localises to the endoplasmic reticulum. It catalyses the reaction L-tyrosyl-[protein] + ATP = O-phospho-L-tyrosyl-[protein] + ADP + H(+). Present in an inactive conformation in the absence of bound ligand. Ligand binding leads to dimerization and activation by autophosphorylation on tyrosine residues. In terms of biological role, tyrosine-protein kinase that acts as a cell-surface receptor for fibroblast growth factors and plays a role in the regulation of cell proliferation, differentiation and migration, and in regulation of lipid metabolism, bile acid biosynthesis, glucose uptake, vitamin D metabolism and phosphate homeostasis. Required for normal down-regulation of the expression of CYP7A1, the rate-limiting enzyme in bile acid synthesis, in response to FGF19. Phosphorylates PLCG1 and FRS2. Ligand binding leads to the activation of several signaling cascades. Activation of PLCG1 leads to the production of the cellular signaling molecules diacylglycerol and inositol 1,4,5-trisphosphate. Phosphorylation of FRS2 triggers recruitment of GRB2, GAB1, PIK3R1 and SOS1, and mediates activation of RAS, MAPK1/ERK2, MAPK3/ERK1 and the MAP kinase signaling pathway, as well as of the AKT1 signaling pathway. The sequence is that of Fibroblast growth factor receptor 4 (fgfr4) from Xenopus laevis (African clawed frog).